The following is a 193-amino-acid chain: Cerebellin-1 (193 aa).

The N-terminal stretch at Met-1–Gly-21 is a signal peptide. Asn-23 is a glycosylation site (N-linked (GlcNAc...) asparagine). The interval Cys-34–Cys-38 is essential for interaction with NRXN1 and linker of two C1q trimers into disulfide-linked hexamers. Residues Ser-57–Leu-193 enclose the C1q domain. Positions Val-62–Leu-193 are necessary for interaction with CBLN3, and homotrimerization. N-linked (GlcNAc...) asparagine glycosylation occurs at Asn-79. Positions Tyr-122 to Asp-147 are essential for interaction with GRID2.

In terms of assembly, homohexamer; disulfide-linked homotrimers. The trimers associate via N-terminal cysteine residues to form disulfide-linked hexamers. May form oligomers with CBLN2, CBLN3 AND CBLN4 prior to secretion. Once secreted, does not interact with other CBLN family members. Interacts with GRID1. Interacts with NRXN1 and NRXN2 long (alpha) and short (beta) isoforms produced by alternative promoter usage. Competes with NLGN1 for NRXN1-binding. Weakly interacts with NRXN3 short isoform and not at all with NRXN3 long isoform. Interacts (via C1q domain) with GRID2; GRID2-binding is calcium-independent; CBLN1 hexamers anchor GRID2 N-terminal domain dimers to monomeric NRXN1 isoform beta; promotes synaptogenesis and mediates the D-Serine-dependent long term depression signals and AMPA receptor endocytosis. Interacts with OTOL1. The proteolytic processing to yield cerebellin seems to occur either prior to the secretion by presynaptic neurons and subsequent oligomerization or in some other location after release of the mature protein. Post-translationally, sialoglycoprotein. In terms of tissue distribution, in the Purkinje cells postsynaptic structures. In the cerebellum, cerebellin is much less abundant than [des-Ser1]-cerebellin.

It is found in the secreted. The protein resides in the postsynaptic cell membrane. Its function is as follows. Required for synapse integrity and synaptic plasticity. During cerebellar synapse formation, essential for the matching and maintenance of pre- and post-synaptic elements at parallel fiber-Purkinje cell synapses, the establishment of the proper pattern of climbing fiber-Purkinje cell innervation, and induction of long-term depression at parallel fiber-Purkinje cell synapses. Plays a role as a synaptic organizer that acts bidirectionally on both pre- and post-synaptic components. On the one hand induces accumulation of synaptic vesicles in the pre-synaptic part by binding with NRXN1 and in other hand induces clustering of GRID2 and its associated proteins at the post-synaptic site through association of GRID2. NRXN1-CBLN1-GRID2 complex directly induces parallel fiber protrusions that encapsulate spines of Purkinje cells leading to accumulation of GRID2 and synaptic vesicles. Required for CBLN3 export from the endoplasmic reticulum and secretion. NRXN1-CBLN1-GRID2 complex mediates the D-Serine-dependent long term depression signals and AMPA receptor endocytosis. Essential for long-term maintenance but not establishment of excitatory synapses. Inhibits the formation and function of inhibitory GABAergic synapses in cerebellar Purkinje cells. Functionally, the cerebellin peptide exerts neuromodulatory functions. Directly stimulates norepinephrine release via the adenylate cyclase/PKA-dependent signaling pathway; and indirectly enhances adrenocortical secretion in vivo, through a paracrine mechanism involving medullary catecholamine release. This is Cerebellin-1 (CBLN1) from Homo sapiens (Human).